A 306-amino-acid polypeptide reads, in one-letter code: Uricase (306 aa).

Residues Lys-5 and Thr-65 each act as charge relay system in the active site. Urate-binding residues include Thr-65, Asp-66, Phe-175, Arg-192, Ile-240, Gln-241, and Asn-267. The segment at 281–306 (AKVLREPPRPTGYQQFSMDRSDLEEQ) is disordered.

This sequence belongs to the uricase family.

It catalyses the reaction urate + O2 + H2O = 5-hydroxyisourate + H2O2. Its pathway is purine metabolism; urate degradation; (S)-allantoin from urate: step 1/3. Its function is as follows. Catalyzes the oxidation of uric acid to 5-hydroxyisourate, which is further processed to form (S)-allantoin. This Halalkalicoccus jeotgali (strain DSM 18796 / CECT 7217 / JCM 14584 / KCTC 4019 / B3) protein is Uricase.